The following is a 910-amino-acid chain: Aconitate hydratase A (910 aa).

Residues Cys-454, Cys-520, and Cys-523 each contribute to the [4Fe-4S] cluster site.

This sequence belongs to the aconitase/IPM isomerase family. Monomer. Requires [4Fe-4S] cluster as cofactor.

The enzyme catalyses citrate = D-threo-isocitrate. It catalyses the reaction (2S,3R)-3-hydroxybutane-1,2,3-tricarboxylate = 2-methyl-cis-aconitate + H2O. The protein operates within carbohydrate metabolism; tricarboxylic acid cycle; isocitrate from oxaloacetate: step 2/2. Its pathway is organic acid metabolism; propanoate degradation. Functionally, involved in the catabolism of short chain fatty acids (SCFA) via the tricarboxylic acid (TCA)(acetyl degradation route) and probably the 2-methylcitrate cycle I (propionate degradation route). Catalyzes the reversible isomerization of citrate to isocitrate via cis-aconitate. Could catalyze the hydration of 2-methyl-cis-aconitate to yield (2R,3S)-2-methylisocitrate. The apo form of AcnA functions as a RNA-binding regulatory protein. The chain is Aconitate hydratase A (acnA) from Pseudomonas aeruginosa (strain ATCC 15692 / DSM 22644 / CIP 104116 / JCM 14847 / LMG 12228 / 1C / PRS 101 / PAO1).